The sequence spans 639 residues: Splicing factor 1 (639 aa).

Disordered stretches follow at residues 1-42 (MATG…VIPP) and 65-94 (LRTG…GKRL). Ala-2 bears the N-acetylalanine mark. Phosphoserine is present on Ser-14. The short motif at 15-19 (KKRKR) is the Nuclear localization signal element. Residue Ser-20 is modified to Phosphoserine; by PKG. Phosphoserine is present on residues Ser-80 and Ser-82. A Phosphotyrosine modification is found at Tyr-87. At Ser-89 the chain carries Phosphoserine. The 82-residue stretch at 141–222 (MIPQDEYPEI…ENVKKAVEQI (82 aa)) folds into the KH domain. The CCHC-type zinc finger occupies 277–296 (TVCTKCGGAGHIASDCKFQR). The disordered stretch occupies residues 325 to 639 (VPASVGSTSG…PAPPPPPPQN (315 aa)). Residues 335-350 (PATTPLASAPRPAAPA) show a composition bias toward low complexity. Residues 382–394 (MHGGGPGGPGGGP) show a composition bias toward gly residues. The span at 418–447 (NGPPPPWMQPPPPPMNQGPHPPGHHGPPPM) shows a compositional bias: pro residues. Phosphoserine is present on Leu-463. An Omega-N-methylarginine modification is found at Lys-467. Residues 470–499 (MPPPPMGMMPPPPPPPSGQPPPPPSGPLPP) are compositionally biased toward pro residues. Composition is skewed to low complexity over residues 515-534 (SSMA…TTTT) and 542-566 (PPWQ…NPTM). 2 stretches are compositionally biased toward pro residues: residues 567-591 (VPLP…PPPG) and 598-608 (APPPPPPPPMD). The span at 615–625 (MMGMGVAGMPP) shows a compositional bias: low complexity. Residues 626-639 (FGMPPAPPPPPPQN) show a composition bias toward pro residues.

This sequence belongs to the BBP/SF1 family. Binds U2AF2. Interacts with U1 snRNA. Binds EWSR1, FUS and TAF15. Interacts with RBM17. Post-translationally, phosphorylation on Ser-20 interferes with U2AF2 binding and spliceosome assembly. Isoform 6 is phosphorylated on Ser-463. In terms of tissue distribution, detected in lung, ovary, adrenal gland, colon, kidney, muscle, pancreas, thyroid, placenta, brain, liver and heart.

The protein resides in the nucleus. Functionally, necessary for the ATP-dependent first step of spliceosome assembly. Binds to the intron branch point sequence (BPS) 5'-UACUAAC-3' of the pre-mRNA. May act as transcription repressor. This is Splicing factor 1 (SF1) from Homo sapiens (Human).